The primary structure comprises 224 residues: MLIEIPNVFSKEEVNQLREELDARTWIDGNQTSGVMASTRKRNQQLDKDDPVALQIGELIMARLLAHPLFVSAALPLQFYPPLFNRYQGGETFGYHIDNAIRSTSEGMVRTDLSATLFLSEPDTYQGGELVIQDTYGQQSIKLAAGSLVLYPSTSLHQVTPVTSGERTAAFMWLQSMVRDEGQRRLLFQLDQSIQALTAQAASEQELFNLTGVYHNLLRRWSEL.

The 99-residue stretch at 78–176 folds into the Fe2OG dioxygenase domain; the sequence is QFYPPLFNRY…RTAAFMWLQS (99 aa). 3 residues coordinate Fe cation: His96, Asp98, and His157. 2-oxoglutarate is bound at residue Arg167.

It depends on Fe(2+) as a cofactor. The cofactor is L-ascorbate.

The protein is PKHD-type hydroxylase Shewmr4_3244 of Shewanella sp. (strain MR-4).